The sequence spans 832 residues: Protein P (832 aa).

Residues 1 to 177 are terminal protein domain (TP); the sequence is MPLSYQHFRR…FCGSPYSWEQ (177 aa). Positions 178–335 are spacer; the sequence is ELQHGAESFH…YCLSHIVNLL (158 aa). Residues 186–229 form a disordered region; sequence FHQQSSGILSRPPVGSSLQSKHSKSRLGLQSQQGHLARRQQGRS. The tract at residues 336–679 is polymerase/reverse transcriptase domain (RT); sequence EDWGPCAEHG…YLNLYPVARQ (344 aa). Positions 346–589 constitute a Reverse transcriptase domain; it reads EHHIRTPRTP…YSLNFMGYVI (244 aa). Aspartate 418, aspartate 540, and aspartate 541 together coordinate Mg(2+).

This sequence belongs to the hepadnaviridae P protein family.

The enzyme catalyses DNA(n) + a 2'-deoxyribonucleoside 5'-triphosphate = DNA(n+1) + diphosphate. The catalysed reaction is Endonucleolytic cleavage to 5'-phosphomonoester.. Activated by host HSP70 and HSP40 in vitro to be able to bind the epsilon loop of the pgRNA. Because deletion of the RNase H region renders the protein partly chaperone-independent, the chaperones may be needed indirectly to relieve occlusion of the RNA-binding site by this domain. Inhibited by several reverse-transcriptase inhibitors: Lamivudine, Adefovir and Entecavir. Its function is as follows. Multifunctional enzyme that converts the viral RNA genome into dsDNA in viral cytoplasmic capsids. This enzyme displays a DNA polymerase activity that can copy either DNA or RNA templates, and a ribonuclease H (RNase H) activity that cleaves the RNA strand of RNA-DNA heteroduplexes in a partially processive 3'- to 5'-endonucleasic mode. Neo-synthesized pregenomic RNA (pgRNA) are encapsidated together with the P protein, and reverse-transcribed inside the nucleocapsid. Initiation of reverse-transcription occurs first by binding the epsilon loop on the pgRNA genome, and is initiated by protein priming, thereby the 5'-end of (-)DNA is covalently linked to P protein. Partial (+)DNA is synthesized from the (-)DNA template and generates the relaxed circular DNA (RC-DNA) genome. After budding and infection, the RC-DNA migrates in the nucleus, and is converted into a plasmid-like covalently closed circular DNA (cccDNA). The activity of P protein does not seem to be necessary for cccDNA generation, and is presumably released from (+)DNA by host nuclear DNA repair machinery. The chain is Protein P from Hepatitis B virus genotype D (isolate Germany/1-91/1991) (HBV-D).